A 445-amino-acid chain; its full sequence is Putative ATP-dependent RNA helicase L538 (445 aa).

The Helicase ATP-binding domain occupies 14-151; it reads IEFMKNNRGV…AVLVNIVRGE (138 aa). 27–34 contacts ATP; the sequence is HSTGAGKT. A DEAH box motif is present at residues 101–104; sequence DEAH. One can recognise a Helicase C-terminal domain in the interval 273–442; it reads KIEDIMKYII…VIDASIENNY (170 aa).

The protein belongs to the DEAD box helicase family. DEAH subfamily.

The protein resides in the virion. The catalysed reaction is ATP + H2O = ADP + phosphate + H(+). The sequence is that of Putative ATP-dependent RNA helicase L538 from Acanthamoeba polyphaga mimivirus (APMV).